A 256-amino-acid chain; its full sequence is Triosephosphate isomerase (256 aa).

Position 12 to 14 (N12 to K14) interacts with substrate. Catalysis depends on H99, which acts as the Electrophile. Catalysis depends on E169, which acts as the Proton acceptor. Residues G175, S214, and G235–G236 contribute to the substrate site.

This sequence belongs to the triosephosphate isomerase family. In terms of assembly, homodimer.

It is found in the cytoplasm. It carries out the reaction D-glyceraldehyde 3-phosphate = dihydroxyacetone phosphate. It functions in the pathway carbohydrate biosynthesis; gluconeogenesis. It participates in carbohydrate degradation; glycolysis; D-glyceraldehyde 3-phosphate from glycerone phosphate: step 1/1. Functionally, involved in the gluconeogenesis. Catalyzes stereospecifically the conversion of dihydroxyacetone phosphate (DHAP) to D-glyceraldehyde-3-phosphate (G3P). In Rhizobium etli (strain ATCC 51251 / DSM 11541 / JCM 21823 / NBRC 15573 / CFN 42), this protein is Triosephosphate isomerase.